Here is a 193-residue protein sequence, read N- to C-terminus: Peptidyl-tRNA hydrolase (193 aa).

TRNA is bound at residue Tyr-17. His-22 functions as the Proton acceptor in the catalytic mechanism. Residues Tyr-68, Asn-70, and Asn-116 each coordinate tRNA.

This sequence belongs to the PTH family. In terms of assembly, monomer.

It is found in the cytoplasm. It catalyses the reaction an N-acyl-L-alpha-aminoacyl-tRNA + H2O = an N-acyl-L-amino acid + a tRNA + H(+). In terms of biological role, hydrolyzes ribosome-free peptidyl-tRNAs (with 1 or more amino acids incorporated), which drop off the ribosome during protein synthesis, or as a result of ribosome stalling. Its function is as follows. Catalyzes the release of premature peptidyl moieties from peptidyl-tRNA molecules trapped in stalled 50S ribosomal subunits, and thus maintains levels of free tRNAs and 50S ribosomes. The protein is Peptidyl-tRNA hydrolase of Acinetobacter baumannii (strain AB307-0294).